Consider the following 208-residue polypeptide: Methyl-CpG-binding domain protein 3-like 3 (208 aa).

The protein belongs to the MBD3L family.

The chain is Methyl-CpG-binding domain protein 3-like 3 (MBD3L3) from Homo sapiens (Human).